Here is a 156-residue protein sequence, read N- to C-terminus: MAKTFKFIFYFWGAFVLVFVLDQWVKSLTLAGLRWQSEYLDLTYALNTGVAFSMLSFLEHNLKYLHLALIVVLFIYLFWQKTLLKTHSIAFGMMLGAGVSNLLDRFIHGGVVDMFFWHKWFNFAIFNVADVMINISVALILIQEIFKKRKKDDRMD.

A run of 3 helical transmembrane segments spans residues 5–25 (FKFI…DQWV), 64–84 (YLHL…KTLL), and 89–109 (IAFG…FIHG). Catalysis depends on residues Asp113 and Asp130. The chain crosses the membrane as a helical span at residues 122–142 (NFAIFNVADVMINISVALILI).

Belongs to the peptidase A8 family.

Its subcellular location is the cell inner membrane. It catalyses the reaction Release of signal peptides from bacterial membrane prolipoproteins. Hydrolyzes -Xaa-Yaa-Zaa-|-(S,diacylglyceryl)Cys-, in which Xaa is hydrophobic (preferably Leu), and Yaa (Ala or Ser) and Zaa (Gly or Ala) have small, neutral side chains.. It participates in protein modification; lipoprotein biosynthesis (signal peptide cleavage). In terms of biological role, this protein specifically catalyzes the removal of signal peptides from prolipoproteins. The protein is Lipoprotein signal peptidase of Campylobacter jejuni subsp. jejuni serotype O:6 (strain 81116 / NCTC 11828).